A 535-amino-acid chain; its full sequence is uncharacterized protein (535 aa).

Disordered stretches follow at residues 1–58 (MSMK…PRGP), 211–254 (EPPK…PPCI), 313–353 (RRVA…EQVK), 376–416 (RPDK…DQRL), 421–440 (QGLD…DAAW), and 508–535 (SLFE…SRRD). Over residues 22–34 (IRRDPWFGGRDNE) the composition is skewed to basic and acidic residues. Residues 179–342 (AQYIRYTPSQ…KARQERSAMR (164 aa)) form an SNW region. The span at 376 to 393 (RPDKADKLRKERERDISE) shows a compositional bias: basic and acidic residues. Residues 511–535 (EHTKEKKRGGDGGDSRGESKRSRRD) are compositionally biased toward basic and acidic residues.

This sequence belongs to the SNW family.

This is an uncharacterized protein from Caenorhabditis elegans.